A 72-amino-acid polypeptide reads, in one-letter code: Translation initiation factor IF-1 2 (72 aa).

Residues 1–72 (MAKEDTIQMQ…SRARIVFRAK (72 aa)) form the S1-like domain.

It belongs to the IF-1 family. As to quaternary structure, component of the 30S ribosomal translation pre-initiation complex which assembles on the 30S ribosome in the order IF-2 and IF-3, IF-1 and N-formylmethionyl-tRNA(fMet); mRNA recruitment can occur at any time during PIC assembly.

Its subcellular location is the cytoplasm. Its function is as follows. One of the essential components for the initiation of protein synthesis. Stabilizes the binding of IF-2 and IF-3 on the 30S subunit to which N-formylmethionyl-tRNA(fMet) subsequently binds. Helps modulate mRNA selection, yielding the 30S pre-initiation complex (PIC). Upon addition of the 50S ribosomal subunit IF-1, IF-2 and IF-3 are released leaving the mature 70S translation initiation complex. This is Translation initiation factor IF-1 2 from Chromobacterium violaceum (strain ATCC 12472 / DSM 30191 / JCM 1249 / CCUG 213 / NBRC 12614 / NCIMB 9131 / NCTC 9757 / MK).